A 484-amino-acid polypeptide reads, in one-letter code: Cobyric acid synthase (484 aa).

The GATase cobBQ-type domain maps to 249 to 438 (QLRVAVPVFT…LHGIFDRPET (190 aa)). Cys330 (nucleophile) is an active-site residue. His430 is a catalytic residue.

The protein belongs to the CobB/CobQ family. CobQ subfamily.

It participates in cofactor biosynthesis; adenosylcobalamin biosynthesis. Its function is as follows. Catalyzes amidations at positions B, D, E, and G on adenosylcobyrinic A,C-diamide. NH(2) groups are provided by glutamine, and one molecule of ATP is hydrogenolyzed for each amidation. The protein is Cobyric acid synthase of Vibrio cholerae serotype O1 (strain ATCC 39315 / El Tor Inaba N16961).